The following is a 201-amino-acid chain: Alpha-1-acid glycoprotein 1 (201 aa).

Positions 1–18 are cleaved as a signal peptide; it reads MALSWVLTVLSLLPLLEA. Glutamine 19 bears the Pyrrolidone carboxylic acid mark. Cystine bridges form between cysteine 23–cysteine 165 and cysteine 90–cysteine 183. A glycan (N-linked (GlcNAc...) (complex) asparagine) is linked at asparagine 33. The N-linked (GlcNAc...) asparagine glycan is linked to asparagine 56. The N-linked (GlcNAc...) (complex) asparagine glycan is linked to asparagine 72. Residues asparagine 93 and asparagine 103 are each glycosylated (N-linked (GlcNAc...) asparagine).

This sequence belongs to the calycin superfamily. Lipocalin family. Post-translationally, N-glycosylated. N-glycan heterogeneity at Asn-33: Hex5HexNAc4 (minor), Hex6HexNAc5 (major) and dHex1Hex6HexNAc5 (minor). Expressed by the liver and secreted in plasma.

The protein localises to the secreted. Functions as a transport protein in the blood stream. Binds various ligands in the interior of its beta-barrel domain. Also binds synthetic drugs and influences their distribution and availability in the body. Appears to function in modulating the activity of the immune system during the acute-phase reaction. The polypeptide is Alpha-1-acid glycoprotein 1 (ORM1) (Homo sapiens (Human)).